A 479-amino-acid polypeptide reads, in one-letter code: Poly(A) polymerase catalytic subunit (479 aa).

Residues Asp-202 and Asp-204 contribute to the active site. Asp-202, Asp-204, and Asp-253 together coordinate Ca(2+).

Belongs to the poxviridae poly(A) polymerase catalytic subunit family. As to quaternary structure, heterodimer of a large (catalytic) subunit and a small (regulatory) subunit.

The catalysed reaction is RNA(n) + ATP = RNA(n)-3'-adenine ribonucleotide + diphosphate. Polymerase that creates the 3'-poly(A) tail of mRNA's. The protein is Poly(A) polymerase catalytic subunit (OPG063) of Bos taurus (Bovine).